The primary structure comprises 618 residues: Protein fem-1 homolog C (618 aa).

7 ANK repeats span residues 2 to 31 (DLKT…DREV), 40 to 70 (NGAT…PVEL), 82 to 111 (EGAP…SVNN), 115 to 144 (TNST…DLEV), 148 to 177 (HGHT…DVNR), 181 to 210 (KGNT…SMEK), and 213 to 243 (YGMT…GLAE). TPR repeat units follow at residues 245 to 279 (ISAL…RHSE) and 337 to 370 (SYYI…QQSN). ANK repeat units lie at residues 482–524 (NGFS…DVNS) and 528–557 (DDNS…HFDS).

This sequence belongs to the fem-1 family. As to quaternary structure, component of a CRL2 E3 ubiquitin-protein ligase complex, also named ECS (Elongin BC-CUL2/5-SOCS-box protein) complex.

It functions in the pathway protein modification; protein ubiquitination. In terms of biological role, substrate-recognition component of a Cul2-RING (CRL2) E3 ubiquitin-protein ligase complex of the DesCEND (destruction via C-end degrons) pathway, which recognizes a C-degron located at the extreme C terminus of target proteins, leading to their ubiquitination and degradation. The C-degron recognized by the DesCEND pathway is usually a motif of less than ten residues and can be present in full-length proteins, truncated proteins or proteolytically cleaved forms. The CRL2(FEM1C) complex specifically recognizes proteins with an arginine at the C-terminus: recognizes and binds proteins ending with -Lys/Arg-Xaa-Arg and -Lys/Arg-Xaa-Xaa-Arg C-degrons, leading to their ubiquitination and degradation. In Danio rerio (Zebrafish), this protein is Protein fem-1 homolog C.